The sequence spans 488 residues: Monodehydroascorbate reductase 4, peroxisomal (488 aa).

Residues 1-3 (MGR) lie on the Cytoplasmic side of the membrane. A helical transmembrane segment spans residues 4–24 (AFVYVILGGGVAAGYAALEFT). Residues 12–15 (GGVA), E39, R46, K51, and 145–146 (RD) contribute to the FAD site. The Peroxisomal portion of the chain corresponds to 25 to 458 (RRGVSDGELC…SASVVMIKKP (434 aa)). Residues 170–176 (GGYIGME), E194, R200, and G259 contribute to the NAD(+) site. 172–176 (YIGME) lines the NADP(+) pocket. Positions 200 and 259 each coordinate NADP(+). D296 contributes to the FAD binding site. 312-313 (EH) is a binding site for NAD(+). 312 to 313 (EH) serves as a coordination point for NADP(+). V314 lines the FAD pocket. An L-ascorbate-binding site is contributed by R318. Y344 contacts FAD. Y344 is a binding site for NAD(+). An NADP(+)-binding site is contributed by Y344. R346 contacts L-ascorbate. A helical transmembrane segment spans residues 459-479 (LYVWHAATGVVVAASVAAFAF). At 480 to 488 (WYGRRRRRW) the chain is on the cytoplasmic side.

The protein belongs to the FAD-dependent oxidoreductase family. Requires FAD as cofactor.

The protein resides in the peroxisome membrane. The enzyme catalyses 2 monodehydro-L-ascorbate radical + NADH + H(+) = 2 L-ascorbate + NAD(+). Functionally, catalyzes the conversion of monodehydroascorbate to ascorbate, oxidizing NADH in the process. Involved in the detoxification of H(2)O(2) that escapes the peroxisome and causes oxidative damage to oil bodies. The polypeptide is Monodehydroascorbate reductase 4, peroxisomal (Arabidopsis thaliana (Mouse-ear cress)).